The primary structure comprises 126 residues: Histone H2B type 1-H (126 aa).

A compositionally biased stretch (low complexity) spans 1–12 (MPEPAKSAPAPK). Positions 1–36 (MPEPAKSAPAPKKGSKKALTKAQKKDGKKRKRSRKE) are disordered. Pro2 bears the N-acetylproline mark. Glu3 is modified (ADP-ribosyl glutamic acid). Lys6 carries the N6-(2-hydroxyisobutyryl)lysine; alternate modification. Position 6 is an N6-(beta-hydroxybutyryl)lysine; alternate (Lys6). Lys6 is subject to N6-acetyllysine; alternate. Lys6 is subject to N6-butyryllysine; alternate. Lys6 is modified (N6-crotonyllysine; alternate). Lys6 is subject to N6-lactoyllysine; alternate. Lys6 is covalently cross-linked (Glycyl lysine isopeptide (Lys-Gly) (interchain with G-Cter in SUMO2); alternate). Ser7 is subject to ADP-ribosylserine. The residue at position 12 (Lys12) is an N6-(beta-hydroxybutyryl)lysine; alternate. An N6-acetyllysine; alternate mark is found at Lys12 and Lys13. 2 positions are modified to N6-crotonyllysine; alternate: Lys12 and Lys13. Residue Lys12 is modified to N6-lactoyllysine; alternate. An N6-(2-hydroxyisobutyryl)lysine; alternate modification is found at Lys13. Ser15 is modified (phosphoserine; by STK4/MST1). N6-acetyllysine; alternate is present on residues Lys16, Lys17, Lys21, and Lys24. Residues Lys16, Lys17, Lys21, and Lys24 each carry the N6-crotonyllysine; alternate modification. An N6-lactoyllysine; alternate mark is found at Lys16, Lys17, Lys21, and Lys24. Lys17 carries the post-translational modification N6-glutaryllysine; alternate. An N6-(2-hydroxyisobutyryl)lysine; alternate mark is found at Lys21 and Lys24. Position 21 is an N6-(beta-hydroxybutyryl)lysine; alternate (Lys21). Lys21 carries the N6-butyryllysine; alternate modification. Lys21 participates in a covalent cross-link: Glycyl lysine isopeptide (Lys-Gly) (interchain with G-Cter in SUMO2); alternate. Lys25 carries the post-translational modification N6-(2-hydroxyisobutyryl)lysine. An N6-(2-hydroxyisobutyryl)lysine; alternate modification is found at Lys35. At Lys35 the chain carries N6-(beta-hydroxybutyryl)lysine; alternate. N6-crotonyllysine; alternate is present on Lys35. Residue Lys35 is modified to N6-glutaryllysine; alternate. Lys35 carries the post-translational modification N6-succinyllysine; alternate. Residue Lys35 forms a Glycyl lysine isopeptide (Lys-Gly) (interchain with G-Cter in ubiquitin); alternate linkage. Glu36 carries the polyADP-ribosyl glutamic acid modification. Phosphoserine; by AMPK is present on Ser37. N6-(2-hydroxyisobutyryl)lysine; alternate is present on residues Lys44, Lys47, and Lys58. Lys44 carries the post-translational modification N6-lactoyllysine; alternate. Lys44 and Lys47 each carry N6-glutaryllysine; alternate. The residue at position 47 (Lys47) is an N6-methyllysine; alternate. Residue Lys58 is modified to N6,N6-dimethyllysine; alternate. Arg80 carries the post-translational modification Dimethylated arginine. Lys86 is modified (N6-(2-hydroxyisobutyryl)lysine; alternate). Lys86 is subject to N6-acetyllysine; alternate. Lys86 carries the N6-lactoyllysine; alternate modification. Lys86 carries the post-translational modification N6,N6,N6-trimethyllysine; alternate. Omega-N-methylarginine occurs at positions 87 and 93. N6-(2-hydroxyisobutyryl)lysine; alternate is present on Lys109. Lys109 carries the post-translational modification N6-(beta-hydroxybutyryl)lysine; alternate. The residue at position 109 (Lys109) is an N6-lactoyllysine; alternate. Residue Lys109 is modified to N6-glutaryllysine; alternate. At Lys109 the chain carries N6-methyllysine; alternate. A glycan (O-linked (GlcNAc) serine) is linked at Ser113. Thr116 is subject to Phosphothreonine. N6-(2-hydroxyisobutyryl)lysine; alternate is present on residues Lys117 and Lys121. Lys117 carries the post-translational modification N6-(beta-hydroxybutyryl)lysine; alternate. 2 positions are modified to N6-lactoyllysine; alternate: Lys117 and Lys121. 2 positions are modified to N6-glutaryllysine; alternate: Lys117 and Lys121. N6-succinyllysine; alternate occurs at positions 117 and 121. The residue at position 117 (Lys117) is an N6-methylated lysine; alternate. Residue Lys121 forms a Glycyl lysine isopeptide (Lys-Gly) (interchain with G-Cter in ubiquitin); alternate linkage.

Belongs to the histone H2B family. The nucleosome is a histone octamer containing two molecules each of H2A, H2B, H3 and H4 assembled in one H3-H4 heterotetramer and two H2A-H2B heterodimers. The octamer wraps approximately 147 bp of DNA. Monoubiquitination at Lys-35 (H2BK34Ub) by the MSL1/MSL2 dimer is required for histone H3 'Lys-4' (H3K4me) and 'Lys-79' (H3K79me) methylation and transcription activation at specific gene loci, such as HOXA9 and MEIS1 loci. Similarly, monoubiquitination at Lys-121 (H2BK120Ub) by the RNF20/40 complex gives a specific tag for epigenetic transcriptional activation and is also prerequisite for histone H3 'Lys-4' and 'Lys-79' methylation. It also functions cooperatively with the FACT dimer to stimulate elongation by RNA polymerase II. H2BK120Ub also acts as a regulator of mRNA splicing: deubiquitination by USP49 is required for efficient cotranscriptional splicing of a large set of exons. In terms of processing, phosphorylated on Ser-15 (H2BS14ph) by STK4/MST1 during apoptosis; which facilitates apoptotic chromatin condensation. Also phosphorylated on Ser-15 in response to DNA double strand breaks (DSBs), and in correlation with somatic hypermutation and immunoglobulin class-switch recombination. Phosphorylation at Ser-37 (H2BS36ph) by AMPK in response to stress promotes transcription. Post-translationally, glcNAcylation at Ser-113 promotes monoubiquitination of Lys-121. It fluctuates in response to extracellular glucose, and associates with transcribed genes. ADP-ribosylated by PARP1 or PARP2 on Ser-7 (H2BS6ADPr) in response to DNA damage. H2BS6ADPr promotes recruitment of CHD1L. Mono-ADP-ribosylated on Glu-3 (H2BE2ADPr) by PARP3 in response to single-strand breaks. Poly ADP-ribosylation on Glu-36 (H2BE35ADPr) by PARP1 regulates adipogenesis: it inhibits phosphorylation at Ser-37 (H2BS36ph), thereby blocking expression of pro-adipogenetic genes. In terms of processing, crotonylation (Kcr) is specifically present in male germ cells and marks testis-specific genes in post-meiotic cells, including X-linked genes that escape sex chromosome inactivation in haploid cells. Crotonylation marks active promoters and enhancers and confers resistance to transcriptional repressors. It is also associated with post-meiotically activated genes on autosomes. Post-translationally, hydroxybutyrylation of histones is induced by starvation. Lactylated in macrophages by EP300/P300 by using lactoyl-CoA directly derived from endogenous or exogenous lactate, leading to stimulates gene transcription.

Its subcellular location is the nucleus. The protein resides in the chromosome. Its function is as follows. Core component of nucleosome. Nucleosomes wrap and compact DNA into chromatin, limiting DNA accessibility to the cellular machineries which require DNA as a template. Histones thereby play a central role in transcription regulation, DNA repair, DNA replication and chromosomal stability. DNA accessibility is regulated via a complex set of post-translational modifications of histones, also called histone code, and nucleosome remodeling. The chain is Histone H2B type 1-H from Mus musculus (Mouse).